We begin with the raw amino-acid sequence, 466 residues long: CBL-interacting protein kinase 20 (466 aa).

The Protein kinase domain occupies 12 to 276 (YELGRSLGHG…IDELVKHPWF (265 aa)). Residues 18–26 (LGHGTFSKV) and Lys-41 each bind ATP. The active-site Proton acceptor is the Asp-139. Residues 162–191 (DFGLSALSASRRHDGLLHTTCGTPSYVAPE) form an activation loop region. Residues 297–329 (KPANAAMNMKPASLNAFDIISLSQGFDLSGMFC) enclose the NAF domain. The PPI stretch occupies residues 337-366 (TQDQLFVTGKPATAIVSRLEEIAETEHFTV). A disordered region spans residues 446–466 (ASEKNQLPAVSEVSPLSSPRN).

It belongs to the protein kinase superfamily. CAMK Ser/Thr protein kinase family. SNF1 subfamily. Mn(2+) serves as cofactor.

The enzyme catalyses L-seryl-[protein] + ATP = O-phospho-L-seryl-[protein] + ADP + H(+). It carries out the reaction L-threonyl-[protein] + ATP = O-phospho-L-threonyl-[protein] + ADP + H(+). CIPK serine-threonine protein kinases interact with CBL proteins. Binding of a CBL protein to the regulatory NAF domain of CIPK protein lead to the activation of the kinase in a calcium-dependent manner. In Oryza sativa subsp. japonica (Rice), this protein is CBL-interacting protein kinase 20 (CIPK20).